A 503-amino-acid chain; its full sequence is MSRDATLPVRGRVAELKLDKKLPKNIDAVVVALFTGEGDSPQLAGGNQLNAIFTNKQQSAILRQLEAVGAKGKANEITRVPGVEDVAPVVAVGLGSAEELDDEKLRRATGTVARSLSGFENVATTIGELGLSAAVTGFGLGSYSFKGLRRAGDDAAEEGVDKPLTVHFIGGDKDEFVAAQITVDAVVLARDLVNTPSSHLYPESYAVIAANEASRYGLKTEILDENQLATDGFGGILAVGNGSSRKPRLLRLTWKHRKASKHVALVGKGVTFDTGGISLKPGANMDNMISDMGGSAAMIATIIAAARLNLKVNITATIPMAENMPSGDAFRPGDVITHYGGLTSEILNTDAEGRLILADAMALASKDNPDYLIDAATLTGAQLVSLGLRTSGVMGTDEFRDTVATTGRSVGEQAWAMPLPEELDEEIKSPVADLRNVTNSRFAGMAAAGRYLQEFVGEGIEWAHVDIAGPAYNTASPYGYTPKRATGQPVRTFIQVLQDIAER.

Mn(2+)-binding residues include Lys268 and Asp273. Residue Lys280 is part of the active site. Positions 291, 350, and 352 each coordinate Mn(2+). Residue Arg354 is part of the active site.

The protein belongs to the peptidase M17 family. The cofactor is Mn(2+).

The protein resides in the cytoplasm. It carries out the reaction Release of an N-terminal amino acid, Xaa-|-Yaa-, in which Xaa is preferably Leu, but may be other amino acids including Pro although not Arg or Lys, and Yaa may be Pro. Amino acid amides and methyl esters are also readily hydrolyzed, but rates on arylamides are exceedingly low.. The catalysed reaction is Release of an N-terminal amino acid, preferentially leucine, but not glutamic or aspartic acids.. Functionally, presumably involved in the processing and regular turnover of intracellular proteins. Catalyzes the removal of unsubstituted N-terminal amino acids from various peptides. This chain is Probable cytosol aminopeptidase, found in Corynebacterium efficiens (strain DSM 44549 / YS-314 / AJ 12310 / JCM 11189 / NBRC 100395).